Here is a 1463-residue protein sequence, read N- to C-terminus: Alpha-agarase (1463 aa).

A signal peptide spans 1-27 (MITSSKKIVSAMLSTSLWIGVASAAYA). Residues 28-684 (ETTNVEAEGY…PSTLSESIFT (657 aa)) constitute a propeptide that is removed on maturation. 2 disordered regions span residues 166–191 (VTPE…PGTP) and 512–549 (TDDI…PQPG). The span at 518–536 (CANTPSGETANATGCSSSQ) shows a compositional bias: polar residues. Residues 534 to 677 (SSQEGGGTDP…GGTNFVHPST (144 aa)) enclose the PA14 domain. The 132-residue stretch at 701 to 832 (IIVELESFVF…QWSGDRVRFT (132 aa)) folds into the CBM6 domain.

It belongs to the glycosyl hydrolase 96 family. In terms of assembly, monomer. Ca(2+) serves as cofactor.

The catalysed reaction is Endohydrolysis of 1,3-alpha-L-galactosidic linkages in agarose, yielding agarotetraose as the major product.. Functionally, alpha-agarase. Hydrolyzes agarose, agarohexaose, neoagarohexaose and porphyran. Hydrolysis of porphyran by this enzyme improves its antioxidant activity. Does not hydrolyze kappa-carrageenan, iota-carrageenen or lambda-carrageenan. This chain is Alpha-agarase, found in Thalassotalea agarivorans (Thalassomonas agarivorans).